The chain runs to 95 residues: Cytosolic calcium-binding protein 3 (95 aa).

Repeat copies occupy residues 30-35 (VEDAEK), 39-43 (DEEEK), 54-59 (VEEEKK), 67-71 (PEEKK), 75-79 (LEEKQ), and 90-94 (VEKAK). Positions 30-94 (VEDAEKTNED…AEEVAVEKAK (65 aa)) are 6 X 5 AA approximate repeats of V-E-E-K-K. The interval 54-95 (VEEEKKAEEVTETPEEKKTEALEEKQTEVAAAEEVAVEKAKE) is disordered. The span at 55 to 80 (EEEKKAEEVTETPEEKKTEALEEKQT) shows a compositional bias: basic and acidic residues.

Low levels in roots (e.g. in cambium) and barely expressed in stems, shoots, flowers, siliques and leaves.

The protein resides in the cytoplasm. Its subcellular location is the cytosol. Binds calcium Ca(2+) and may act as a signal mediator to buffer Ca(2+). In Arabidopsis thaliana (Mouse-ear cress), this protein is Cytosolic calcium-binding protein 3.